The chain runs to 1562 residues: Cell surface antigen I/II (1562 aa).

An N-terminal signal peptide occupies residues 1–38 (MKVKKTYGFRKSKISKTLCGAVLGTVAAVSVAGQKVFA). Residues 42–54 (TTTSDVDTKVVGT) show a composition bias toward low complexity. The segment at 42–91 (TTTSDVDTKVVGTQTGNPATNLPEAQGSASKEAEQSQNQAGETNGSIPVE) is disordered. Residues 60-551 (ATNLPEAQGS…SKAKYDQKIL (492 aa)) form a helical region. Positions 76-87 (QSQNQAGETNGS) are enriched in polar residues. 4 Ag I/II A repeats span residues 147–221 (KKTT…QKTN), 222–303 (AANQ…QEAN), 304–385 (AANE…KKAN), and 386–467 (AANE…QKDL). Disordered stretches follow at residues 824–973 (VPKV…PTDP) and 1482–1509 (SNTV…RTST). Positions 943-958 (PTPPTPTPDQPEPNKP) are enriched in pro residues. Residues 1500-1509 (QDPSSPRTST) are compositionally biased toward low complexity. The LPXTG sorting signal signature appears at 1529-1533 (LPNTG). T1532 bears the Pentaglycyl murein peptidoglycan amidated threonine mark. The propeptide at 1533–1562 (GVTNNAYMPLLGIIGLVTSFSLLGLKAKKD) is removed by sortase.

Belongs to the antigen I/II family. In terms of processing, detected as a 185 kDa cell surface protein, but also as 2 proteins in S.mutans culture supernatants of about 150 kDa (antigen I) and 50 kDa (antigen II); antigen II is only seen after proteolysis. Antigen I and II have the same N-terminus but different C-termini.

It localises to the secreted. It is found in the cell wall. Surface protein antigen implicated in dental caries. In Streptococcus mutans serotype c (strain ATCC 700610 / UA159), this protein is Cell surface antigen I/II.